The sequence spans 322 residues: Putative T-box protein 11 (322 aa).

Residues 16 to 185 (LWRSCHEYDN…NNPYSTGSRK (170 aa)) constitute a DNA-binding region (T-box). Polar residues predominate over residues 171–182 (TLKTNNNPYSTG). The interval 171–214 (TLKTNNNPYSTGSRKDRRRERQSPVYSEGTSSEKSISPPPAKKI) is disordered.

The protein resides in the nucleus. The protein is Putative T-box protein 11 (tbx-11) of Caenorhabditis elegans.